The primary structure comprises 964 residues: Glycine dehydrogenase (decarboxylating) (964 aa).

Over residues 1–11 (MNSTLQNQTKT) the composition is skewed to polar residues. The disordered stretch occupies residues 1-21 (MNSTLQNQTKTNLEKVGTDPL). Residue Lys713 is modified to N6-(pyridoxal phosphate)lysine.

This sequence belongs to the GcvP family. As to quaternary structure, the glycine cleavage system is composed of four proteins: P, T, L and H. Pyridoxal 5'-phosphate is required as a cofactor.

The enzyme catalyses N(6)-[(R)-lipoyl]-L-lysyl-[glycine-cleavage complex H protein] + glycine + H(+) = N(6)-[(R)-S(8)-aminomethyldihydrolipoyl]-L-lysyl-[glycine-cleavage complex H protein] + CO2. Functionally, the glycine cleavage system catalyzes the degradation of glycine. The P protein binds the alpha-amino group of glycine through its pyridoxal phosphate cofactor; CO(2) is released and the remaining methylamine moiety is then transferred to the lipoamide cofactor of the H protein. This Leptospira interrogans serogroup Icterohaemorrhagiae serovar copenhageni (strain Fiocruz L1-130) protein is Glycine dehydrogenase (decarboxylating).